Reading from the N-terminus, the 796-residue chain is Bud site selection protein 27 (796 aa).

A coiled-coil region spans residues 81 to 121 (KEEAITFVDDKLKLMEDAIEQFNLKIEEAKKTLDNLNHMED). A compositionally biased stretch (polar residues) spans 152–168 (VISSSVTPTTKQPSQSN). Disordered stretches follow at residues 152-197 (VISS…EENL), 300-344 (LRAQ…QVGF), 421-458 (EGEA…TTRS), 535-624 (EKEP…AKTG), and 752-796 (ATAS…DSKP). Basic and acidic residues-rich tracts occupy residues 169-197 (SKKE…EENL) and 306-318 (SQDH…DVNK). Residues 427 to 441 (SNRRTRVSRFRKDRA) show a composition bias toward basic residues. The span at 535-550 (EKEPEINSKSEFETPF) shows a compositional bias: basic and acidic residues. The span at 551 to 568 (KKKKLKSLQKPRSSKSMK) shows a compositional bias: basic residues. Residues 579 to 589 (ISDDDYDDDDD) are compositionally biased toward acidic residues. A Phosphoserine modification is found at serine 580. Over residues 601–610 (NNTDEQDKFP) the composition is skewed to basic and acidic residues.

Belongs to the prefoldin subunit alpha family.

It is found in the cytoplasm. Involved in gene expression controlled by TOR kinase and nutrient signaling. May also be involved in positioning the proximal bud pole signal. This chain is Bud site selection protein 27 (BUD27), found in Saccharomyces cerevisiae (strain ATCC 204508 / S288c) (Baker's yeast).